The following is a 321-amino-acid chain: ATP-dependent 6-phosphofructokinase (321 aa).

Position 12 (Gly12) interacts with ATP. ADP is bound by residues 22 to 26 (RGVVR) and 55 to 60 (RYSVSD). ATP is bound by residues 73-74 (RF) and 103-106 (GDGS). Asp104 is a Mg(2+) binding site. 127–129 (TID) is a binding site for substrate. Residue Asp129 is the Proton acceptor of the active site. Arg156 is a binding site for ADP. Substrate contacts are provided by residues Arg164 and 171–173 (MGR). Residues 187–189 (GCE), Lys213, and 215–217 (KRH) each bind ADP. Substrate-binding positions include Glu224, Arg245, and 251 to 254 (HIQR).

The protein belongs to the phosphofructokinase type A (PFKA) family. ATP-dependent PFK group I subfamily. Prokaryotic clade 'B1' sub-subfamily. In terms of assembly, homotetramer. It depends on Mg(2+) as a cofactor.

It is found in the cytoplasm. The catalysed reaction is beta-D-fructose 6-phosphate + ATP = beta-D-fructose 1,6-bisphosphate + ADP + H(+). It functions in the pathway carbohydrate degradation; glycolysis; D-glyceraldehyde 3-phosphate and glycerone phosphate from D-glucose: step 3/4. With respect to regulation, allosterically activated by ADP and other diphosphonucleosides, and allosterically inhibited by phosphoenolpyruvate. In terms of biological role, catalyzes the phosphorylation of D-fructose 6-phosphate to fructose 1,6-bisphosphate by ATP, the first committing step of glycolysis. This is ATP-dependent 6-phosphofructokinase from Histophilus somni (strain 129Pt) (Haemophilus somnus).